Consider the following 245-residue polypeptide: Bis(5'-nucleosyl)-tetraphosphatase PrpE [asymmetrical] (245 aa).

Belongs to the PrpE family. Ni(2+) serves as cofactor.

It catalyses the reaction P(1),P(4)-bis(5'-guanosyl) tetraphosphate + H2O = GMP + GTP + 2 H(+). Its function is as follows. Asymmetrically hydrolyzes Ap4p to yield AMP and ATP. The chain is Bis(5'-nucleosyl)-tetraphosphatase PrpE [asymmetrical] from Anoxybacillus flavithermus (strain DSM 21510 / WK1).